A 295-amino-acid chain; its full sequence is Probable cell division protein WhiA (295 aa).

Positions 262–293 (SLRELGKKLNLTKSQIYSKLKRIIKIAERFGD) form a DNA-binding region, H-T-H motif.

This sequence belongs to the WhiA family.

Functionally, involved in cell division and chromosome segregation. This chain is Probable cell division protein WhiA, found in Thermotoga maritima (strain ATCC 43589 / DSM 3109 / JCM 10099 / NBRC 100826 / MSB8).